Here is a 268-residue protein sequence, read N- to C-terminus: Eukaryotic translation initiation factor 3 subunit G-2 (268 aa).

The RRM domain maps to 187–265 (SAVRISNLSE…LILCVEWSKP (79 aa)).

Belongs to the eIF-3 subunit G family. Component of the eukaryotic translation initiation factor 3 (eIF-3) complex. The eIF-3 complex interacts with pix.

The protein resides in the cytoplasm. Functionally, RNA-binding component of the eukaryotic translation initiation factor 3 (eIF-3) complex, which is involved in protein synthesis of a specialized repertoire of mRNAs and, together with other initiation factors, stimulates binding of mRNA and methionyl-tRNAi to the 40S ribosome. The eIF-3 complex specifically targets and initiates translation of a subset of mRNAs involved in cell proliferation. This subunit can bind 18S rRNA. The polypeptide is Eukaryotic translation initiation factor 3 subunit G-2 (Drosophila willistoni (Fruit fly)).